The chain runs to 326 residues: Transposase for insertion sequence element IS4351 (326 aa).

Positions 156–317 (IDERPEIVEL…TPNEKFKQII (162 aa)) constitute an Integrase catalytic domain.

The protein belongs to the transposase IS30 family.

Functionally, required for the transposition of the insertion element. This chain is Transposase for insertion sequence element IS4351, found in Bacteroides fragilis.